A 217-amino-acid chain; its full sequence is MKFFIDTANVDEIKKANDMGVICGVTTNPSLIAKEGRDFKKTIEEITTIVDGPISGEVKATTVKAEDMIAEAREIAKIHKNMVVKIPMTVEGLKAVKVLSKEGIKTNVTLIFSANQALLAARAGATYVSPFIGRLDDISMDGLELIRTISEIFATHAIETEIISASVRHPIHVTECALAGADIATVPYSVIEQMTKHPLTDQGIEKFKKDYEAVFGK.

Lys85 functions as the Schiff-base intermediate with substrate in the catalytic mechanism.

Belongs to the transaldolase family. Type 3B subfamily.

The protein resides in the cytoplasm. The enzyme catalyses D-sedoheptulose 7-phosphate + D-glyceraldehyde 3-phosphate = D-erythrose 4-phosphate + beta-D-fructose 6-phosphate. It participates in carbohydrate degradation; pentose phosphate pathway; D-glyceraldehyde 3-phosphate and beta-D-fructose 6-phosphate from D-ribose 5-phosphate and D-xylulose 5-phosphate (non-oxidative stage): step 2/3. In terms of biological role, transaldolase is important for the balance of metabolites in the pentose-phosphate pathway. This is Probable transaldolase from Brachyspira hyodysenteriae (strain ATCC 49526 / WA1).